We begin with the raw amino-acid sequence, 432 residues long: Glutamate-1-semialdehyde 2,1-aminomutase (432 aa).

Position 270 is an N6-(pyridoxal phosphate)lysine (lysine 270).

This sequence belongs to the class-III pyridoxal-phosphate-dependent aminotransferase family. HemL subfamily. In terms of assembly, homodimer. Requires pyridoxal 5'-phosphate as cofactor.

It localises to the cytoplasm. It carries out the reaction (S)-4-amino-5-oxopentanoate = 5-aminolevulinate. It participates in porphyrin-containing compound metabolism; protoporphyrin-IX biosynthesis; 5-aminolevulinate from L-glutamyl-tRNA(Glu): step 2/2. The protein is Glutamate-1-semialdehyde 2,1-aminomutase of Acinetobacter baylyi (strain ATCC 33305 / BD413 / ADP1).